The primary structure comprises 415 residues: Elongation factor 1-gamma 1 (415 aa).

Ser-2 bears the N-acetylserine mark. The GST N-terminal domain occupies 2–78 (SQGTLYANFR…YLVKLSQDDK (77 aa)). A Phosphothreonine modification is found at Thr-32. The GST C-terminal domain occupies 89 to 215 (DLNAQAQIIR…KDFKFADKPL (127 aa)). The tract at residues 212–256 (DKPLSPPQKKKEKKAPAAAPAASKKKEEAKPAATETETSSKKPKH) is disordered. The region spanning 254–415 (PKHPLELLGK…KEIVDGKVLK (162 aa)) is the EF-1-gamma C-terminal domain.

The eukaryotic elongation factor 1 complex (eEF1) is probably a heterohexamer. Two trimeric complexes, each composed of eEF1A (TEF1 or TEF2), eEF1Balpha (EFB1) and eEF1Bgamma (CAM1 or TEF4), are probably dimerized via the eF1Bgamma subunits. The eEF1B subcomplex with the GEF activity is formed of eEF1Balpha and eEF1Bgamma. CAM1 interacts with EFB1. Component of a complex bound to MXR1 promoter region.

The protein localises to the cytoplasm. Its subcellular location is the nucleus. It functions in the pathway protein biosynthesis; polypeptide chain elongation. Functionally, subunit of the eukaryotic elongation factor 1 complex (eEF1). Probably plays a role in anchoring the complex to other cellular components. May be involved in transcriptional regulation of MXR1. The protein is Elongation factor 1-gamma 1 (CAM1) of Saccharomyces cerevisiae (strain ATCC 204508 / S288c) (Baker's yeast).